The following is a 101-amino-acid chain: Apolipoprotein C-II (101 aa).

Positions 1–22 (MGTRYFLVGFLILLVLGFEVQG) are cleaved as a signal peptide. Residues 66–74 (AVDEKIRDI) are lipid binding. The interval 78–101 (STAAVTTYAGIITDQVFSVLSGKD) is lipoprotein lipase cofactor.

This sequence belongs to the apolipoprotein C2 family. Proapolipoprotein C-II is synthesized as a sialic acid containing glycoprotein which is subsequently desialylated prior to its proteolytic processing. In terms of processing, proapolipoprotein C-II undergoes proteolytic cleavage of its N-terminal hexapeptide to generate apolipoprotein C-II. In bovine, proapolipoprotein C-II was found to be the minor form whereas apolipoprotein C-II was found to be the major form in plasma.

Its subcellular location is the secreted. Its function is as follows. Component of chylomicrons, very low-density lipoproteins (VLDL), low-density lipoproteins (LDL), and high-density lipoproteins (HDL) in plasma. Plays an important role in lipoprotein metabolism as an activator of lipoprotein lipase. Both proapolipoprotein C-II and apolipoprotein C-II can activate lipoprotein lipase. This is Apolipoprotein C-II (APOC2) from Bos taurus (Bovine).